A 138-amino-acid chain; its full sequence is Superoxide dismutase [Mn] (138 aa).

Mn(2+) contacts are provided by H2, H49, D133, and H137.

This sequence belongs to the iron/manganese superoxide dismutase family. Mn(2+) is required as a cofactor.

The enzyme catalyses 2 superoxide + 2 H(+) = H2O2 + O2. Its function is as follows. Destroys superoxide anion radicals which are normally produced within the cells and which are toxic to biological systems. This chain is Superoxide dismutase [Mn] (sodA), found in Mycobacterium szulgai.